The chain runs to 208 residues: FMN-dependent NADH:quinone oxidoreductase 1 (208 aa).

This sequence belongs to the azoreductase type 1 family. Homodimer. FMN serves as cofactor.

The catalysed reaction is 2 a quinone + NADH + H(+) = 2 a 1,4-benzosemiquinone + NAD(+). It catalyses the reaction N,N-dimethyl-1,4-phenylenediamine + anthranilate + 2 NAD(+) = 2-(4-dimethylaminophenyl)diazenylbenzoate + 2 NADH + 2 H(+). In terms of biological role, quinone reductase that provides resistance to thiol-specific stress caused by electrophilic quinones. Functionally, also exhibits azoreductase activity. Catalyzes the reductive cleavage of the azo bond in aromatic azo compounds to the corresponding amines. The sequence is that of FMN-dependent NADH:quinone oxidoreductase 1 from Bacillus licheniformis (strain ATCC 14580 / DSM 13 / JCM 2505 / CCUG 7422 / NBRC 12200 / NCIMB 9375 / NCTC 10341 / NRRL NRS-1264 / Gibson 46).